The sequence spans 96 residues: Putative pterin-4-alpha-carbinolamine dehydratase (96 aa).

The protein belongs to the pterin-4-alpha-carbinolamine dehydratase family.

The enzyme catalyses (4aS,6R)-4a-hydroxy-L-erythro-5,6,7,8-tetrahydrobiopterin = (6R)-L-erythro-6,7-dihydrobiopterin + H2O. In Prochlorococcus marinus (strain MIT 9515), this protein is Putative pterin-4-alpha-carbinolamine dehydratase.